A 332-amino-acid chain; its full sequence is Long form salivary protein D7L2 (332 aa).

Positions 1–21 (MFPPRKFLLSSFILAALHVTA) are cleaved as a signal peptide. 2 cysteine pairs are disulfide-bonded: Cys-40–Cys-77 and Cys-73–Cys-133. Position 61 (Trp-61) interacts with leukotriene E4. 2 residues coordinate leukotriene E4: Gly-157 and Lys-176. Cystine bridges form between Cys-184–Cys-219, Cys-200–Cys-331, and Cys-259–Cys-278. 3 residues coordinate noradrenaline: Glu-185, Arg-203, and His-216. 2 residues coordinate noradrenaline: Asp-294 and Glu-297.

Belongs to the PBP/GOBP family. In terms of assembly, interacts with human CD4. Saliva (at protein level). Female salivary gland (at protein level). Detected in the head and thorax of the female mosquitoes, where the salivary glands are located.

The protein localises to the secreted. Functionally, modulates blood feeding of female mosquitoes on vertebrate species by binding and sequestering different mediators involved in the host response, such as biogenic amines and eicosanoids. Binds serotonin, histamine, tryptamine, noradrenaline, leukotriene B4, leukotriene C4, leukotriene D4, leukotriene E4 and U-46619, a stable analog of thromboxane A2. Does not bind adrenaline. Exhibits vasodilating activity. Inhibits agonist-induced platelet aggregation but not blood clotting. (Microbial infection) Probably promotes Plasmodium gallinaceum oocyst development in mosquito midgut. The chain is Long form salivary protein D7L2 from Aedes aegypti (Yellowfever mosquito).